A 271-amino-acid chain; its full sequence is Beta-lactamase (271 aa).

The active-site Acyl-ester intermediate is Ser-46. Position 210–212 (210–212) interacts with substrate; that stretch reads KTG.

The protein belongs to the class-A beta-lactamase family. In terms of assembly, monomer.

It carries out the reaction a beta-lactam + H2O = a substituted beta-amino acid. Its function is as follows. Hydrolyzes broad-spectrum beta-lactam antibiotics. Active against cephalosporins. This is Beta-lactamase from Proteus vulgaris.